The chain runs to 84 residues: MKVTLIAILTCAAVLVLHTTAAEELEESQLMEVGMPDTELAAVDEERLFECSFSCEIEKEGDKPCKKKKCKGGWKCKFNMCVKV.

The first 22 residues, 1-22 (MKVTLIAILTCAAVLVLHTTAA), serve as a signal peptide directing secretion. The propeptide occupies 23-48 (EELEESQLMEVGMPDTELAAVDEERL). Intrachain disulfides connect Cys-51/Cys-65, Cys-55/Cys-76, and Cys-70/Cys-81.

It belongs to the neurotoxin 12 (Hwtx-2) family. 02 (Hwtx-2) subfamily. Expressed by the venom gland.

It is found in the secreted. Its function is as follows. Blocks neuromuscular transmission. Acts cooperatively to potentiate the activity of huwentoxin-I. Paralyzes locusts and kills mice following intracerebroventricular injection. The sequence is that of U1-theraphotoxin-Hs1a from Cyriopagopus schmidti (Chinese bird spider).